A 93-amino-acid polypeptide reads, in one-letter code: Putative membrane protein insertion efficiency factor (93 aa).

The protein belongs to the UPF0161 family.

It localises to the cell inner membrane. Could be involved in insertion of integral membrane proteins into the membrane. This Cupriavidus taiwanensis (strain DSM 17343 / BCRC 17206 / CCUG 44338 / CIP 107171 / LMG 19424 / R1) (Ralstonia taiwanensis (strain LMG 19424)) protein is Putative membrane protein insertion efficiency factor.